Consider the following 285-residue polypeptide: Polyamine aminopropyltransferase (285 aa).

Positions 5 to 241 (DSWFTEHFQA…GWWSVTLSSK (237 aa)) constitute a PABS domain. Q35 is a binding site for S-methyl-5'-thioadenosine. Spermidine is bound by residues H66 and D90. Residues D110 and 141 to 142 (DG) each bind S-methyl-5'-thioadenosine. D160 acts as the Proton acceptor in catalysis. A spermidine-binding site is contributed by 160–163 (DSTD). P167 contributes to the S-methyl-5'-thioadenosine binding site.

The protein belongs to the spermidine/spermine synthase family. In terms of assembly, homodimer or homotetramer.

Its subcellular location is the cytoplasm. The catalysed reaction is S-adenosyl 3-(methylsulfanyl)propylamine + putrescine = S-methyl-5'-thioadenosine + spermidine + H(+). The protein operates within amine and polyamine biosynthesis; spermidine biosynthesis; spermidine from putrescine: step 1/1. Its function is as follows. Catalyzes the irreversible transfer of a propylamine group from the amino donor S-adenosylmethioninamine (decarboxy-AdoMet) to putrescine (1,4-diaminobutane) to yield spermidine. This chain is Polyamine aminopropyltransferase, found in Xylella fastidiosa (strain 9a5c).